A 428-amino-acid chain; its full sequence is Hercynine oxygenase (428 aa).

Position 46 (His-46) interacts with Fe cation. 82–85 (RASR) serves as a coordination point for gamma-L-glutamyl-L-cysteine. His-129 and His-133 together coordinate Fe cation. Gamma-L-glutamyl-L-cysteine-binding residues include Asp-411 and Arg-415.

The protein belongs to the EgtB family. Monomer. Requires Fe(2+) as cofactor.

The catalysed reaction is gamma-L-glutamyl-L-cysteine + hercynine + O2 = gamma-L-glutamyl-hercynylcysteine S-oxide + H2O. The protein operates within amino-acid biosynthesis; ergothioneine biosynthesis. Its function is as follows. Catalyzes the oxidative sulfurization of hercynine (N-alpha,N-alpha,N-alpha-trimethyl-L-histidine) into hercynyl-gamma-L-glutamyl-L-cysteine sulfoxide, a step in the biosynthesis pathway of ergothioneine. Cannot use the alternative thiols cysteine, N-acetylcysteine, or glutathione instead of gamma-glutamylcysteine as substrates, and histidine is a poor sulfur acceptor substrate compared to hercynine. The chain is Hercynine oxygenase from Mycolicibacterium smegmatis (strain ATCC 700084 / mc(2)155) (Mycobacterium smegmatis).